The primary structure comprises 570 residues: Dihydroxy-acid dehydratase (570 aa).

Position 61 (Cys61) interacts with [2Fe-2S] cluster. Residue Asp94 coordinates Mg(2+). [2Fe-2S] cluster is bound at residue Cys135. Asp136 and Lys137 together coordinate Mg(2+). Position 137 is an N6-carboxylysine (Lys137). Cys207 lines the [2Fe-2S] cluster pocket. Residue Glu459 participates in Mg(2+) binding. Catalysis depends on Ser485, which acts as the Proton acceptor.

This sequence belongs to the IlvD/Edd family. As to quaternary structure, homodimer. Requires [2Fe-2S] cluster as cofactor. Mg(2+) is required as a cofactor.

It catalyses the reaction (2R)-2,3-dihydroxy-3-methylbutanoate = 3-methyl-2-oxobutanoate + H2O. The enzyme catalyses (2R,3R)-2,3-dihydroxy-3-methylpentanoate = (S)-3-methyl-2-oxopentanoate + H2O. It functions in the pathway amino-acid biosynthesis; L-isoleucine biosynthesis; L-isoleucine from 2-oxobutanoate: step 3/4. Its pathway is amino-acid biosynthesis; L-valine biosynthesis; L-valine from pyruvate: step 3/4. Functions in the biosynthesis of branched-chain amino acids. Catalyzes the dehydration of (2R,3R)-2,3-dihydroxy-3-methylpentanoate (2,3-dihydroxy-3-methylvalerate) into 2-oxo-3-methylpentanoate (2-oxo-3-methylvalerate) and of (2R)-2,3-dihydroxy-3-methylbutanoate (2,3-dihydroxyisovalerate) into 2-oxo-3-methylbutanoate (2-oxoisovalerate), the penultimate precursor to L-isoleucine and L-valine, respectively. This chain is Dihydroxy-acid dehydratase, found in Lactococcus lactis subsp. cremoris (strain MG1363).